Reading from the N-terminus, the 289-residue chain is Acetyl-coenzyme A carboxylase carboxyl transferase subunit beta (289 aa).

The region spanning 28-289 (VMTKCPKCKK…QGGEMAVWQS (262 aa)) is the CoA carboxyltransferase N-terminal domain. The Zn(2+) site is built by Cys32, Cys35, Cys51, and Cys54. The C4-type zinc finger occupies 32–54 (CPKCKKIMYTKEVLKNLKVCVNC).

It belongs to the AccD/PCCB family. Acetyl-CoA carboxylase is a heterohexamer composed of biotin carboxyl carrier protein (AccB), biotin carboxylase (AccC) and two subunits each of ACCase subunit alpha (AccA) and ACCase subunit beta (AccD). Zn(2+) is required as a cofactor.

The protein resides in the cytoplasm. It catalyses the reaction N(6)-carboxybiotinyl-L-lysyl-[protein] + acetyl-CoA = N(6)-biotinyl-L-lysyl-[protein] + malonyl-CoA. The protein operates within lipid metabolism; malonyl-CoA biosynthesis; malonyl-CoA from acetyl-CoA: step 1/1. Functionally, component of the acetyl coenzyme A carboxylase (ACC) complex. Biotin carboxylase (BC) catalyzes the carboxylation of biotin on its carrier protein (BCCP) and then the CO(2) group is transferred by the transcarboxylase to acetyl-CoA to form malonyl-CoA. This chain is Acetyl-coenzyme A carboxylase carboxyl transferase subunit beta, found in Bacillus thuringiensis subsp. konkukian (strain 97-27).